The sequence spans 112 residues: Large ribosomal subunit protein bL17 (112 aa).

This sequence belongs to the bacterial ribosomal protein bL17 family. Part of the 50S ribosomal subunit. Contacts protein L32.

The protein is Large ribosomal subunit protein bL17 of Heliobacterium modesticaldum (strain ATCC 51547 / Ice1).